Consider the following 272-residue polypeptide: 3-methyl-2-oxobutanoate hydroxymethyltransferase (272 aa).

Residues D52 and D91 each coordinate Mg(2+). Residues 52-53 (DS), D91, and K121 each bind 3-methyl-2-oxobutanoate. Mg(2+) is bound at residue E123. E190 functions as the Proton acceptor in the catalytic mechanism.

Belongs to the PanB family. In terms of assembly, homodecamer; pentamer of dimers. Mg(2+) is required as a cofactor.

The protein resides in the cytoplasm. It catalyses the reaction 3-methyl-2-oxobutanoate + (6R)-5,10-methylene-5,6,7,8-tetrahydrofolate + H2O = 2-dehydropantoate + (6S)-5,6,7,8-tetrahydrofolate. It functions in the pathway cofactor biosynthesis; (R)-pantothenate biosynthesis; (R)-pantoate from 3-methyl-2-oxobutanoate: step 1/2. Catalyzes the reversible reaction in which hydroxymethyl group from 5,10-methylenetetrahydrofolate is transferred onto alpha-ketoisovalerate to form ketopantoate. The polypeptide is 3-methyl-2-oxobutanoate hydroxymethyltransferase (Cytophaga hutchinsonii (strain ATCC 33406 / DSM 1761 / CIP 103989 / NBRC 15051 / NCIMB 9469 / D465)).